Consider the following 154-residue polypeptide: SsrA-binding protein (154 aa).

Belongs to the SmpB family.

The protein localises to the cytoplasm. In terms of biological role, required for rescue of stalled ribosomes mediated by trans-translation. Binds to transfer-messenger RNA (tmRNA), required for stable association of tmRNA with ribosomes. tmRNA and SmpB together mimic tRNA shape, replacing the anticodon stem-loop with SmpB. tmRNA is encoded by the ssrA gene; the 2 termini fold to resemble tRNA(Ala) and it encodes a 'tag peptide', a short internal open reading frame. During trans-translation Ala-aminoacylated tmRNA acts like a tRNA, entering the A-site of stalled ribosomes, displacing the stalled mRNA. The ribosome then switches to translate the ORF on the tmRNA; the nascent peptide is terminated with the 'tag peptide' encoded by the tmRNA and targeted for degradation. The ribosome is freed to recommence translation, which seems to be the essential function of trans-translation. The protein is SsrA-binding protein of Ruminiclostridium cellulolyticum (strain ATCC 35319 / DSM 5812 / JCM 6584 / H10) (Clostridium cellulolyticum).